The primary structure comprises 267 residues: Small ribosomal subunit protein uS2 (267 aa).

The disordered stretch occupies residues 232–267 (ATVREEEFADAPAEDAKPARRAPAKKAAADKGEAQA). Basic and acidic residues predominate over residues 258-267 (AAADKGEAQA).

It belongs to the universal ribosomal protein uS2 family.

The chain is Small ribosomal subunit protein uS2 from Stenotrophomonas maltophilia (strain R551-3).